The following is a 308-amino-acid chain: E3 ubiquitin-protein ligase RING2 (308 aa).

An N-acetylserine modification is found at Ser2. Residues 2–179 (SQAVQTNGTQ…AEDNGDSSHC (178 aa)) form an interaction with HIP2 region. Ser41 bears the Phosphoserine mark. The segment at 51–91 (CPICLDMLKNTMTTKECLHRFCADCIITALRSGNKECPTCR) adopts an RING-type zinc-finger fold. The tract at residues 93–98 (KLVSKR) is interaction with nucleosomes via an acidic patch on histone H2A and histone H2B. Lys112 is covalently cross-linked (Glycyl lysine isopeptide (Lys-Gly) (interchain with G-Cter in ubiquitin)). Phosphoserine occurs at positions 143 and 168. The interval 157-206 (QRGKKQQIENGSGAEDNGDSSHCSNASTHSNQEAGPSNKRTKTSDDSGLE) is disordered. A compositionally biased stretch (polar residues) spans 176–191 (SSHCSNASTHSNQEAG). Lys249 is covalently cross-linked (Glycyl lysine isopeptide (Lys-Gly) (interchain with G-Cter in SUMO2)).

In terms of assembly, component of chromatin-associated Polycomb (PcG) complexes. Component of a number of PRC1-like complexes; these complexes contain either the polycomb group ring finger protein PCGF1, or PCGF2, or PCGF3, or BMI1, or PCGF5, or PCGF6. Distinct PRC1-like complexes are composed of a RING1 subunit (RING1B or RING1A), one of the six PCGF proteins (PCGF1, PCGF2, PCGF3, BMI1, PCGF5 or PCGF6), one PHC protein (PHC1, PHC2 or PHC3) and one of the CBX proteins (CBX2, CBX4, CBX6, CBX7 or CBX8). Part of a complex that contains RNF2, UB2D3 and BMI1; within that complex RNF2 and BMI1 form a tight heterodimer, where UB2D3 interacts only with RNF2. The complex composed of RNF2, UB2D3 and BMI1 binds nucleosomes, and has activity only with nucleosomal histone H2A. Part of a complex that contains PCGF5, RNF2 and UBE2D3. Part of a complex that contains AUTS2, PCGF5, RNF2, CSNK2B and RYBP. Interacts with CBX6 and CBX8. Interacts with PHC1, PCGF2, RYBP, CBX7, CBX4, CBX2, RNF1/RING1, BMI1 and PHC2. Interaction with RYBP and CBX7 is mutually exclusive; both compete for the same binding site on RNF2. Component of repressive BCOR complex containing a Polycomb group subcomplex at least composed of RYBP, PCGF1, BCOR and RING1. Interacts with CBX2 and PHC1. Interacts with CHTOP. Interacts with AURKB. Part of the E2F6.com-1 complex in G0 phase composed of E2F6, MGA, MAX, TFDP1, CBX3, BAT8, EUHMTASE1, RNF1/RING1, RNF2/RING2, MBLR, L3MBTL2 and YAF2. Component of some MLL1/MLL complex, at least composed of the core components KMT2A/MLL1, ASH2L, HCFC1/HCF1, WDR5 and RBBP5, as well as the facultative components BACC1, CHD8, E2F6, HSP70, INO80C, KANSL1, LAS1L, MAX, MCRS1, MGA, MYST1/MOF, PELP1, PHF20, PRP31, RING2, RUVB1/TIP49A, RUVB2/TIP49B, SENP3, TAF1, TAF4, TAF6, TAF7, TAF9 and TEX10. Interacts with RYBP, HIP2 and TFCP2. Interacts with NUPR1. Interacts with SAMD7 in a PHC2-dependent manner. Monoubiquitinated, by auto-ubiquitination. Polyubiquitinated in the presence of UBE2D3 (in vitro).

Its subcellular location is the nucleus. The protein localises to the cytoplasm. It is found in the chromosome. The enzyme catalyses S-ubiquitinyl-[E2 ubiquitin-conjugating enzyme]-L-cysteine + [acceptor protein]-L-lysine = [E2 ubiquitin-conjugating enzyme]-L-cysteine + N(6)-ubiquitinyl-[acceptor protein]-L-lysine.. It participates in protein modification; protein ubiquitination. In terms of biological role, E3 ubiquitin-protein ligase that mediates monoubiquitination of 'Lys-119' of histone H2A (H2AK119Ub), thereby playing a central role in histone code and gene regulation. H2AK119Ub gives a specific tag for epigenetic transcriptional repression and participates in X chromosome inactivation of female mammals. May be involved in the initiation of both imprinted and random X inactivation. Essential component of a Polycomb group (PcG) multiprotein PRC1-like complex, a complex class required to maintain the transcriptionally repressive state of many genes, including Hox genes, throughout development. PcG PRC1 complex acts via chromatin remodeling and modification of histones, rendering chromatin heritably changed in its expressibility. E3 ubiquitin-protein ligase activity is enhanced by BMI1/PCGF4. Acts as the main E3 ubiquitin ligase on histone H2A of the PRC1 complex, while RING1 may rather act as a modulator of RNF2/RING2 activity. Plays a role in the transcriptional repression of genes that are required for pluripotency in embryonic stem cells, thereby contributing to differentiation of the ectodermal and endodermal germ layers. Association with the chromosomal DNA is cell-cycle dependent. In resting B- and T-lymphocytes, interaction with AURKB leads to block its activity, thereby maintaining transcription in resting lymphocytes. Also acts as a negative regulator of autophagy by mediating ubiquitination of AMBRA1, leading to its subsequent degradation. This Rattus norvegicus (Rat) protein is E3 ubiquitin-protein ligase RING2 (Rnf2).